A 175-amino-acid polypeptide reads, in one-letter code: Mitochondrial inner membrane protease subunit 2 (175 aa).

A helical transmembrane segment spans residues 19 to 37 (FFVAVPVAVTFLDRVACVA). Active-site residues include S43 and K91.

The protein belongs to the peptidase S26 family. IMP2 subfamily. Heterodimer of 2 subunits, IMMPL1 and IMMPL2.

The protein resides in the mitochondrion inner membrane. Catalyzes the removal of transit peptides required for the targeting of proteins from the mitochondrial matrix, across the inner membrane, into the inter-membrane space. Known to process the nuclear encoded protein DIABLO. The polypeptide is Mitochondrial inner membrane protease subunit 2 (Immp2l) (Mus musculus (Mouse)).